The chain runs to 154 residues: Transcriptional repressor NrdR (154 aa).

A zinc finger lies at 3–34 (CPFCGANDTKVIDSRLVAEGEQVRRRRECLAC). One can recognise an ATP-cone domain in the interval 49–139 (PRLIKTDGSR…VYRRFQDLNE (91 aa)).

It belongs to the NrdR family. The cofactor is Zn(2+).

Negatively regulates transcription of bacterial ribonucleotide reductase nrd genes and operons by binding to NrdR-boxes. The sequence is that of Transcriptional repressor NrdR from Pseudomonas fluorescens (strain Pf0-1).